The chain runs to 645 residues: Threonine--tRNA ligase (645 aa).

Residues 1–61 (MPAITLPDGS…SSDASVKFIT (61 aa)) enclose the TGS domain. A catalytic region spans residues 243-536 (DHRRIGREMD…LIEQYAGKFP (294 aa)). Positions 336, 387, and 513 each coordinate Zn(2+).

The protein belongs to the class-II aminoacyl-tRNA synthetase family. Homodimer. The cofactor is Zn(2+).

Its subcellular location is the cytoplasm. It carries out the reaction tRNA(Thr) + L-threonine + ATP = L-threonyl-tRNA(Thr) + AMP + diphosphate + H(+). Functionally, catalyzes the attachment of threonine to tRNA(Thr) in a two-step reaction: L-threonine is first activated by ATP to form Thr-AMP and then transferred to the acceptor end of tRNA(Thr). Also edits incorrectly charged L-seryl-tRNA(Thr). The polypeptide is Threonine--tRNA ligase (Gluconobacter oxydans (strain 621H) (Gluconobacter suboxydans)).